The sequence spans 954 residues: MMVSSPPQLEINLETDAEFVARHIGITPSDLPKMLSLLGYGSLKELINAVIPPEIRLQRPLALSEGLSETAALQKLRTLAQQNQVWRSYIGMGYYNCITPSVIQRNILENPGWYTQYTPYQAEIAQGRLEALLNFQTLVSDLTGLAIANASLLDEATAAAEAMTLSFNACRQRGANRFLVAQDCHPQTLAVLRTRALPLGIQIVPIDPIAGELPWENAFGLLLQYPASDGAVRSPQALIAAAHERGLLVTVATDLLALTLLRPPGELGADIAVGSSQRFGVPLGYGGPHAAFFATREDFKRQLPGRLVGVSHDALGQRALRLALQTREQHIRREKATSNICTAQVLLAVVASMYAVYHGPDGLRQIAERIHQRTVRLAAGLEAAGYQLYYSEFFDTLRIGLGNLPVPVLKERAAAARINLRYFDDGSAGISLDETTTEKDVADLLALFGARPAEVEGGDRLPAALKRQSPYLQHPVFQDYHSEHALLRYIHRLQAKDLSLTTSMIPLGSCTMKLNATAEMLPISWPEFNQLHPFAPQEQAQGYQALFRELAAMLAEITGFDAISLQPNAGSQGEYAGLLVIRQYHHSRGESQRNVCLIPTSAHGTNPASAVMAGMQVVAVNCDAQGNIDVADLAAKAETYGDRLAALMITYPSTHGVFETGICQICDIIHRYGGQVYMDGANMNAQVGLCRPGDFGADVCHLNLHKTFCIPHGGGGPGVGPIGVKAHLAPFLPTTQVIPQGSETGPVTAAPWGSASILPISWMYITLMGGVGLTRATAIAILNANYIAKRLEPYYPVLYKGAHGLVAHECILDLRPLKKSAGIEVEDIAKRLMDYGFHAPTVSWPVPGTLMIEPTESETKAELDRFCEAMIAIRSEIAEIEAGVSDRQQNPLKNAPHPALMLATEPWPYPYSREVAAYPAPWLREYKFWPAVARIDNAYGDRHLVCTCSMPLTN.

Residue lysine 706 is modified to N6-(pyridoxal phosphate)lysine.

It belongs to the GcvP family. The glycine cleavage system is composed of four proteins: P, T, L and H. Pyridoxal 5'-phosphate serves as cofactor.

The enzyme catalyses N(6)-[(R)-lipoyl]-L-lysyl-[glycine-cleavage complex H protein] + glycine + H(+) = N(6)-[(R)-S(8)-aminomethyldihydrolipoyl]-L-lysyl-[glycine-cleavage complex H protein] + CO2. Functionally, the glycine cleavage system catalyzes the degradation of glycine. The P protein binds the alpha-amino group of glycine through its pyridoxal phosphate cofactor; CO(2) is released and the remaining methylamine moiety is then transferred to the lipoamide cofactor of the H protein. This chain is Glycine dehydrogenase (decarboxylating), found in Thermosynechococcus vestitus (strain NIES-2133 / IAM M-273 / BP-1).